The sequence spans 132 residues: Ribosome-binding factor A (132 aa).

It belongs to the RbfA family. Monomer. Binds 30S ribosomal subunits, but not 50S ribosomal subunits or 70S ribosomes.

It localises to the cytoplasm. Functionally, one of several proteins that assist in the late maturation steps of the functional core of the 30S ribosomal subunit. Associates with free 30S ribosomal subunits (but not with 30S subunits that are part of 70S ribosomes or polysomes). Required for efficient processing of 16S rRNA. May interact with the 5'-terminal helix region of 16S rRNA. This is Ribosome-binding factor A from Pseudomonas putida (strain ATCC 700007 / DSM 6899 / JCM 31910 / BCRC 17059 / LMG 24140 / F1).